Here is a 305-residue protein sequence, read N- to C-terminus: Probable aspartoacylase (305 aa).

Zn(2+)-binding residues include H13 and E16. Residues R55 and 62-63 each bind substrate; that span reads NR. H105 provides a ligand contact to Zn(2+). Substrate contacts are provided by E163 and Y273.

Belongs to the AspA/AstE family. Aspartoacylase subfamily. The cofactor is Zn(2+).

The catalysed reaction is an N-acyl-L-aspartate + H2O = a carboxylate + L-aspartate. The chain is Probable aspartoacylase from Prochlorococcus marinus (strain NATL2A).